The sequence spans 388 residues: MRLSLVLALLPVAFGAPTRRDEPAPLHVPRDVDSLIKDTYIVKYKDITAFSAVDEGLKLLSGKPKHIYKGAFKGFSGKIDAKTLELLRDDPSVDFIEQDAIVTLAAYTTQASAPWGLARISTRQRGPTGYTYDDSAGAGTCSYIIDTGIQANHPNFGGRAFQLVSYQGSNADGNGHGTHVAGTIGSTTYGVAKRTTLLGVKVLSDSGSGSTSGIIAGINYVVSDSRSRSCPNGSVANMSLGGGYSASLNSAAKSLIDNNIFLAVAAGNENQNAANVSPASEPTVCTVGATTSADAKASFSNYGSGVDIFAPGQSILSTWIGSSTNTISGTSMASPHIAGLAAYLAGLEGFPGAQALCNRIVALATTGVITGLPSGTPNRLAFNGNPSG.

Positions 1 to 15 are cleaved as a signal peptide; that stretch reads MRLSLVLALLPVAFG. The propeptide at 16–105 is removed in mature form; the sequence is APTRRDEPAP…IEQDAIVTLA (90 aa). The 275-residue stretch at 114–388 folds into the Peptidase S8 domain; the sequence is PWGLARISTR…RLAFNGNPSG (275 aa). Cysteines 141 and 230 form a disulfide. Catalysis depends on charge relay system residues aspartate 146 and histidine 176. 2 N-linked (GlcNAc...) asparagine glycosylation sites follow: asparagine 232 and asparagine 237. The cysteines at positions 285 and 357 are disulfide-linked. The Charge relay system role is filled by serine 331.

It belongs to the peptidase S8 family.

The protein localises to the secreted. Its activity is regulated as follows. The elicitor proteolytic activity is completely inhibited by PMSF. The activity is also significantly reduced by aprotinin (leading to 37% residual activity), by leupeptin (leading to 54% residual activity), by the ovomucoid trypsin inhibitor (leading to 65% residual activity), and by p-aminobenzamidine (leading to 26% residual activity). Extracellular elicitor protein that induces a strong defense response in strawberry and confers both local and systemic plant resistance against the fungal pathogen Colletotricum acutatum, the casual agent of anthracnose disease. AsES activates a cascade of defense responses, including calcium influx, oxidative burst, hypersensitive cell-death response (HR), accumulation of autofluorescent compounds, cell-wall reinforcement with callose and lignin deposition, salicylic acid accumulation, and expression of defense-related genes, such as PR1, PG1, MYB30, RBOH-D, RBOH-F, CHI23, and FLS. The oxidative burst consists in a progressive extracellular accumulation of H(2)O(2) that starts immediately after the contact with AsES and is preceded by a rapid and transient cell membrane depolarization. During this phase takes place also a rapid intracellular accumulation of NO at the chloroplasts. After the first extracellular H(2)O(2) production phase, two intracellular H(2)O(2) accumulation events occur, the first 2 hours after induction, and the second 7 hours after induction. AsES also produces a transient increase of ion leakage, and a progressive alkalinization of the extracellular medium. Confers also local and systemic plant resistance against Botrytis cinerea in Arabidopsis thaliana. Systemic, but not local resistance is dependent on the length of exposure to AsES. The protection to B.cinerea is due to the induction of the plant defenses via the salicylic acid, jasmonic acid and ethylene signaling pathways. Exhibits subtilisin-like proteolytic activity which is necessary but not sufficient for its elicitor function in strawberry plants. Probably induces defense by means of proteolysis of one or multiple host proteins that are specific targets of this protease. The chain is Subtilisin-like serine protease AsES from Sarocladium strictum (Black bundle disease fungus).